We begin with the raw amino-acid sequence, 194 residues long: Holliday junction branch migration complex subunit RuvA (194 aa).

The interval 1-64 (MIGRLRGVLT…DDSAALYGFL (64 aa)) is domain I. A domain II region spans residues 65 to 140 (SESERRLFRH…RAADFNNGIS (76 aa)). The flexible linker stretch occupies residues 140–144 (STSGK). The tract at residues 145-194 (LNLDTVSEAALALQQLGYKPAEAARMARDAGTESDDVAIVIKKALQTVLR) is domain III.

Belongs to the RuvA family. In terms of assembly, homotetramer. Forms an RuvA(8)-RuvB(12)-Holliday junction (HJ) complex. HJ DNA is sandwiched between 2 RuvA tetramers; dsDNA enters through RuvA and exits via RuvB. An RuvB hexamer assembles on each DNA strand where it exits the tetramer. Each RuvB hexamer is contacted by two RuvA subunits (via domain III) on 2 adjacent RuvB subunits; this complex drives branch migration. In the full resolvosome a probable DNA-RuvA(4)-RuvB(12)-RuvC(2) complex forms which resolves the HJ.

The protein resides in the cytoplasm. Its function is as follows. The RuvA-RuvB-RuvC complex processes Holliday junction (HJ) DNA during genetic recombination and DNA repair, while the RuvA-RuvB complex plays an important role in the rescue of blocked DNA replication forks via replication fork reversal (RFR). RuvA specifically binds to HJ cruciform DNA, conferring on it an open structure. The RuvB hexamer acts as an ATP-dependent pump, pulling dsDNA into and through the RuvAB complex. HJ branch migration allows RuvC to scan DNA until it finds its consensus sequence, where it cleaves and resolves the cruciform DNA. In Xylella fastidiosa (strain M23), this protein is Holliday junction branch migration complex subunit RuvA.